A 377-amino-acid polypeptide reads, in one-letter code: Succinyl-diaminopimelate desuccinylase (377 aa).

Residue histidine 67 participates in Zn(2+) binding. Aspartate 69 is a catalytic residue. Residue aspartate 100 coordinates Zn(2+). The active-site Proton acceptor is glutamate 134. Zn(2+) is bound by residues glutamate 135, glutamate 163, and histidine 349.

This sequence belongs to the peptidase M20A family. DapE subfamily. As to quaternary structure, homodimer. Requires Zn(2+) as cofactor. Co(2+) is required as a cofactor.

The enzyme catalyses N-succinyl-(2S,6S)-2,6-diaminopimelate + H2O = (2S,6S)-2,6-diaminopimelate + succinate. It functions in the pathway amino-acid biosynthesis; L-lysine biosynthesis via DAP pathway; LL-2,6-diaminopimelate from (S)-tetrahydrodipicolinate (succinylase route): step 3/3. Its function is as follows. Catalyzes the hydrolysis of N-succinyl-L,L-diaminopimelic acid (SDAP), forming succinate and LL-2,6-diaminopimelate (DAP), an intermediate involved in the bacterial biosynthesis of lysine and meso-diaminopimelic acid, an essential component of bacterial cell walls. The polypeptide is Succinyl-diaminopimelate desuccinylase (Dechloromonas aromatica (strain RCB)).